A 377-amino-acid polypeptide reads, in one-letter code: Chaperone protein DnaJ (377 aa).

Residues 4-69 (DYYEALGVTR…QKRAAYDRFG (66 aa)) form the J domain. A CR-type zinc finger spans residues 135-213 (GKTAQIRVPT…CHGQGRVTQE (79 aa)). Cys-148, Cys-151, Cys-165, Cys-168, Cys-187, Cys-190, Cys-201, and Cys-204 together coordinate Zn(2+). CXXCXGXG motif repeat units follow at residues 148–155 (CDECSGSG), 165–172 (CTMCSGSG), 187–194 (CPGCNGRG), and 201–208 (CEKCHGQG).

It belongs to the DnaJ family. Homodimer. Requires Zn(2+) as cofactor.

Its subcellular location is the cytoplasm. Participates actively in the response to hyperosmotic and heat shock by preventing the aggregation of stress-denatured proteins and by disaggregating proteins, also in an autonomous, DnaK-independent fashion. Unfolded proteins bind initially to DnaJ; upon interaction with the DnaJ-bound protein, DnaK hydrolyzes its bound ATP, resulting in the formation of a stable complex. GrpE releases ADP from DnaK; ATP binding to DnaK triggers the release of the substrate protein, thus completing the reaction cycle. Several rounds of ATP-dependent interactions between DnaJ, DnaK and GrpE are required for fully efficient folding. Also involved, together with DnaK and GrpE, in the DNA replication of plasmids through activation of initiation proteins. This Brucella canis (strain ATCC 23365 / NCTC 10854 / RM-666) protein is Chaperone protein DnaJ.